The primary structure comprises 199 residues: Recombination protein RecR (199 aa).

Residues 58 to 73 form a C4-type zinc finger; that stretch reads CSVCGNLTDTDVCPLC. In terms of domain architecture, Toprim spans 81–176; the sequence is SVICVVEDPR…KTTRIAHGIP (96 aa).

It belongs to the RecR family.

Functionally, may play a role in DNA repair. It seems to be involved in an RecBC-independent recombinational process of DNA repair. It may act with RecF and RecO. In Acetivibrio thermocellus (strain ATCC 27405 / DSM 1237 / JCM 9322 / NBRC 103400 / NCIMB 10682 / NRRL B-4536 / VPI 7372) (Clostridium thermocellum), this protein is Recombination protein RecR.